A 285-amino-acid polypeptide reads, in one-letter code: CCR4-NOT transcription complex subunit 7 (285 aa).

The a divalent metal cation site is built by aspartate 40, glutamate 42, aspartate 161, aspartate 230, and glutamate 278.

Belongs to the CAF1 family. As to quaternary structure, component of the CCR4-NOT complex; distinct complexes seem to exist that differ in the participation of probably mutually exclusive catalytic subunits; the complex contains two deadenylase subunits, CNOT6 or CNOT6L, and CNOT7 or CNOT8. In the complex, interacts directly with CNOT1. Interacts with AGO2. Interacts with TOB1; recruited by TOB1 to a ternary complex with CPEB3 which is required for mRNA deadenylation and decay. Interacts with BTG1. Interacts with BTG2. Interacts with NANOS2. Interacts with ZFP36, ZFP36L1 and ZFP36L2; these interactions are inhibited in response to phorbol 12-myristate 13-acetate (PMA) treatment in a p38 MAPK-dependent manner. Interacts with BTG4. Interacts with EIF4E; this interaction is increased by CNOT7 interaction with BTG4. Mn(2+) serves as cofactor. The cofactor is Mg(2+). Co(2+) is required as a cofactor.

The protein resides in the nucleus. Its subcellular location is the cytoplasm. It is found in the P-body. It localises to the cytoplasmic ribonucleoprotein granule. The catalysed reaction is Exonucleolytic cleavage of poly(A) to 5'-AMP.. Functionally, has 3'-5' poly(A) exoribonuclease activity for synthetic poly(A) RNA substrate. Its function seems to be partially redundant with that of CNOT8. Catalytic component of the CCR4-NOT complex which is one of the major cellular mRNA deadenylases and is linked to various cellular processes including bulk mRNA degradation, miRNA-mediated repression, translational repression during translational initiation and general transcription regulation. During miRNA-mediated repression the complex also seems to act as translational repressor during translational initiation. Additional complex functions may be a consequence of its influence on mRNA expression. Required for miRNA-mediated mRNA deadenylation. Associates with members of the BTG family such as TOB1 and BTG2 and is required for their anti-proliferative activity. This Bos taurus (Bovine) protein is CCR4-NOT transcription complex subunit 7 (CNOT7).